Consider the following 265-residue polypeptide: Phosphate import ATP-binding protein PstB (265 aa).

The ABC transporter domain occupies Met18–Ile260. Residue Gly50 to Ser57 participates in ATP binding.

The protein belongs to the ABC transporter superfamily. Phosphate importer (TC 3.A.1.7) family. As to quaternary structure, the complex is composed of two ATP-binding proteins (PstB), two transmembrane proteins (PstC and PstA) and a solute-binding protein (PstS).

Its subcellular location is the cell inner membrane. It carries out the reaction phosphate(out) + ATP + H2O = ADP + 2 phosphate(in) + H(+). In terms of biological role, part of the ABC transporter complex PstSACB involved in phosphate import. Responsible for energy coupling to the transport system. This chain is Phosphate import ATP-binding protein PstB, found in Ruegeria pomeroyi (strain ATCC 700808 / DSM 15171 / DSS-3) (Silicibacter pomeroyi).